A 255-amino-acid chain; its full sequence is 1-(5-phosphoribosyl)-5-[(5-phosphoribosylamino)methylideneamino] imidazole-4-carboxamide isomerase (255 aa).

Asp8 acts as the Proton acceptor in catalysis. Residue Asp129 is the Proton donor of the active site.

Belongs to the HisA/HisF family.

Its subcellular location is the cytoplasm. The catalysed reaction is 1-(5-phospho-beta-D-ribosyl)-5-[(5-phospho-beta-D-ribosylamino)methylideneamino]imidazole-4-carboxamide = 5-[(5-phospho-1-deoxy-D-ribulos-1-ylimino)methylamino]-1-(5-phospho-beta-D-ribosyl)imidazole-4-carboxamide. The protein operates within amino-acid biosynthesis; L-histidine biosynthesis; L-histidine from 5-phospho-alpha-D-ribose 1-diphosphate: step 4/9. This is 1-(5-phosphoribosyl)-5-[(5-phosphoribosylamino)methylideneamino] imidazole-4-carboxamide isomerase from Prochlorococcus marinus (strain AS9601).